A 121-amino-acid chain; its full sequence is Small ribosomal subunit protein uS13 (121 aa).

The segment at 92-121 (KRGLPVRGQRTRTNARTRKGPRRAAASLKK) is disordered.

This sequence belongs to the universal ribosomal protein uS13 family. As to quaternary structure, part of the 30S ribosomal subunit. Forms a loose heterodimer with protein S19. Forms two bridges to the 50S subunit in the 70S ribosome.

Functionally, located at the top of the head of the 30S subunit, it contacts several helices of the 16S rRNA. In the 70S ribosome it contacts the 23S rRNA (bridge B1a) and protein L5 of the 50S subunit (bridge B1b), connecting the 2 subunits; these bridges are implicated in subunit movement. Contacts the tRNAs in the A and P-sites. This Bordetella bronchiseptica (strain ATCC BAA-588 / NCTC 13252 / RB50) (Alcaligenes bronchisepticus) protein is Small ribosomal subunit protein uS13.